Here is a 370-residue protein sequence, read N- to C-terminus: Protein commissureless 1 (370 aa).

The Extracellular portion of the chain corresponds to 1–136 (MISTTDYPTV…DADMHVIINY (136 aa)). Residues 108 to 131 (LRDRSEESGESSWWSQIFGDADMH) form a required for vesicular localization region. A helical membrane pass occupies residues 137–157 (LWIGVVSSLVILSLVFILFSC). Residues 158–370 (YFYRKFRTWK…CASLVVVVAA (213 aa)) are Cytoplasmic-facing. Short sequence motifs (PY-motif) lie at residues 220-223 (PPCY) and 229-232 (LPSY). The interaction with Nedd4 stretch occupies residues 227-237 (TGLPSYDEALH). The disordered stretch occupies residues 287–312 (VEEDKADSSSSTSASASPSSSESSNL). A compositionally biased stretch (low complexity) spans 294–312 (SSSSTSASASPSSSESSNL).

The protein belongs to the commissureless family. Interacts (probably via PY-motifs) with Nedd4 (via WW2 domain). Interacts with Robo. Post-translationally, ubiquitinated by Nedd4; which promotes endocytosis of the comm/robo complex and comm proteasomal degradation. Not ubiquitinated by Nedd4.

It localises to the cytoplasmic vesicle membrane. Its subcellular location is the cell membrane. Controls axon guidance across the CNS midline by preventing the delivery of Robo to the growth cone. In Drosophila melanogaster (Fruit fly), this protein is Protein commissureless 1.